Consider the following 541-residue polypeptide: uncharacterized protein (541 aa).

Helical transmembrane passes span 99–119, 131–153, 165–185, 187–207, 224–244, 256–276, 325–345, 367–387, 409–429, 439–459, 472–494, and 508–528; these read WIVV…SSVY, GVSI…FGSL, FVVY…GGCA, NIWT…TPLS, YVLP…PIIG, WVFW…FFFM, LLIT…VYII, IGLS…CTPI, LYPL…FAWT, WIVP…VFFV, AASA…SLVG, and SLLG…FIYG.

It belongs to the major facilitator superfamily. CAR1 family.

The protein resides in the membrane. This is an uncharacterized protein from Schizosaccharomyces pombe (strain 972 / ATCC 24843) (Fission yeast).